Here is a 219-residue protein sequence, read N- to C-terminus: 2-C-methyl-D-erythritol 4-phosphate cytidylyltransferase (219 aa).

The protein belongs to the IspD/TarI cytidylyltransferase family. IspD subfamily.

The catalysed reaction is 2-C-methyl-D-erythritol 4-phosphate + CTP + H(+) = 4-CDP-2-C-methyl-D-erythritol + diphosphate. It functions in the pathway isoprenoid biosynthesis; isopentenyl diphosphate biosynthesis via DXP pathway; isopentenyl diphosphate from 1-deoxy-D-xylulose 5-phosphate: step 2/6. Functionally, catalyzes the formation of 4-diphosphocytidyl-2-C-methyl-D-erythritol from CTP and 2-C-methyl-D-erythritol 4-phosphate (MEP). The polypeptide is 2-C-methyl-D-erythritol 4-phosphate cytidylyltransferase (Endomicrobium trichonymphae).